The primary structure comprises 136 residues: NADPH-dependent 7-cyano-7-deazaguanine reductase (136 aa).

Cys53 (thioimide intermediate) is an active-site residue. The active-site Proton donor is Asp60. Substrate contacts are provided by residues 75–77 (VEL) and 94–95 (HE).

Belongs to the GTP cyclohydrolase I family. QueF type 1 subfamily.

Its subcellular location is the cytoplasm. The catalysed reaction is 7-aminomethyl-7-carbaguanine + 2 NADP(+) = 7-cyano-7-deazaguanine + 2 NADPH + 3 H(+). Its pathway is tRNA modification; tRNA-queuosine biosynthesis. Catalyzes the NADPH-dependent reduction of 7-cyano-7-deazaguanine (preQ0) to 7-aminomethyl-7-deazaguanine (preQ1). The sequence is that of NADPH-dependent 7-cyano-7-deazaguanine reductase from Trichormus variabilis (strain ATCC 29413 / PCC 7937) (Anabaena variabilis).